The chain runs to 636 residues: Rust resistance kinase Lr10 (636 aa).

The first 24 residues, 1 to 24 (MSKLLVIALLLLPLINHGIYLATA), serve as a signal peptide directing secretion. The Extracellular portion of the chain corresponds to 25–276 (WDDQDFFKYC…MPDPHGSHIK (252 aa)). Residues Asn-56, Asn-177, and Asn-222 are each glycosylated (N-linked (GlcNAc...) asparagine). A helical transmembrane segment spans residues 277–297 (VIAATSSVAAFVALLLTVATV). Residues 298 to 636 (LYLSLKTRYN…FVSSENELMS (339 aa)) lie on the Cytoplasmic side of the membrane. The Protein kinase domain maps to 339–628 (RRFKEKVGQG…SLQMPPKPFV (290 aa)). ATP is bound by residues 345 to 353 (VGQGGFGSV) and Lys-367. The Proton acceptor role is filled by Asp-466.

The protein belongs to the protein kinase superfamily. Ser/Thr protein kinase family. As to expression, specifically expressed in the aerial parts of the plant.

Its subcellular location is the cell membrane. It catalyses the reaction L-seryl-[protein] + ATP = O-phospho-L-seryl-[protein] + ADP + H(+). It carries out the reaction L-threonyl-[protein] + ATP = O-phospho-L-threonyl-[protein] + ADP + H(+). The polypeptide is Rust resistance kinase Lr10 (Triticum aestivum (Wheat)).